Here is a 256-residue protein sequence, read N- to C-terminus: Chorismate mutase (256 aa).

In terms of domain architecture, Chorismate mutase spans 3-255 (FTKPETVLNL…EVEYLLRRLE (253 aa)). The L-tyrosine site is built by Arg-75 and Arg-76. L-tryptophan contacts are provided by Asn-138, Asn-139, Gly-141, and Ser-142. L-tyrosine is bound by residues Asn-139, Gly-141, Ser-142, and Thr-145.

In terms of assembly, homodimer.

It is found in the cytoplasm. It carries out the reaction chorismate = prephenate. Its pathway is metabolic intermediate biosynthesis; prephenate biosynthesis; prephenate from chorismate: step 1/1. Its activity is regulated as follows. Each dimer has two allosteric binding sites that can bind the regulatory effectors tryptophan or tyrosine. Can bind either one tryptophan or one tyrosine, two tryptophan or two tyrosine or one tryptophan and one tyrosine, which differentially affect the catalytic activity. Activated by tryptophan and subject to feedback inhibition by tyrosine. In the presence of both tryptophan and tyrosine, the enzyme is in the activated state. In terms of biological role, catalyzes the Claisen rearrangement of chorismate to prephenate. Acts at the first branch point in the aromatic amino acid pathway where it steers biosynthesis towards phenylalanine and tyrosine, and away from tryptophan. This is Chorismate mutase from Saccharomyces cerevisiae (strain ATCC 204508 / S288c) (Baker's yeast).